The sequence spans 128 residues: UPF0325 protein CKO_03204 (128 aa).

Belongs to the UPF0325 family.

This Citrobacter koseri (strain ATCC BAA-895 / CDC 4225-83 / SGSC4696) protein is UPF0325 protein CKO_03204.